A 228-amino-acid chain; its full sequence is Orotate phosphoribosyltransferase (228 aa).

5-phospho-alpha-D-ribose 1-diphosphate is bound by residues Arg107, Lys108, Lys111, and 133-141; that span reads EDLTTDGGS. Thr137 lines the orotate pocket.

This sequence belongs to the purine/pyrimidine phosphoribosyltransferase family. PyrE subfamily. Homodimer. Requires Mg(2+) as cofactor.

It catalyses the reaction orotidine 5'-phosphate + diphosphate = orotate + 5-phospho-alpha-D-ribose 1-diphosphate. It functions in the pathway pyrimidine metabolism; UMP biosynthesis via de novo pathway; UMP from orotate: step 1/2. In terms of biological role, catalyzes the transfer of a ribosyl phosphate group from 5-phosphoribose 1-diphosphate to orotate, leading to the formation of orotidine monophosphate (OMP). The polypeptide is Orotate phosphoribosyltransferase (Jannaschia sp. (strain CCS1)).